Reading from the N-terminus, the 259-residue chain is Haloacid dehalogenase-like hydrolase domain-containing protein 2 (259 aa).

Mg(2+) contacts are provided by Asp13 and Ser15. Substrate contacts are provided by residues 13 to 15 (DLS) and 46 to 47 (TN). A coiled-coil region spans residues 47 to 71 (NTTKESKQDLLERLRKLEFDISEDE). Lys50 is subject to N6-succinyllysine. Residue Lys179 participates in substrate binding. Asp204 lines the Mg(2+) pocket.

This sequence belongs to the HAD-like hydrolase superfamily. Mg(2+) is required as a cofactor.

The chain is Haloacid dehalogenase-like hydrolase domain-containing protein 2 (HDHD2) from Homo sapiens (Human).